The chain runs to 264 residues: 2-hydroxyhexa-2,4-dienoate hydratase (264 aa).

The protein belongs to the hydratase/decarboxylase family.

The enzyme catalyses (2Z,4Z)-2-hydroxyhexa-2,4-dienoate + H2O = 4-hydroxy-2-oxohexanoate. Functionally, involved in the catatabolism of testosterone. Catalyzes the hydration of 2-hydroxyhexa-2,4-dienoic acid to 4-hydroxy-2-oxohexanoic acid. This is 2-hydroxyhexa-2,4-dienoate hydratase (tesE) from Comamonas testosteroni (Pseudomonas testosteroni).